Consider the following 389-residue polypeptide: Allantoicase (389 aa).

Belongs to the allantoicase family.

It catalyses the reaction allantoate + H2O = (S)-ureidoglycolate + urea. It functions in the pathway nitrogen metabolism; (S)-allantoin degradation; (S)-ureidoglycolate from allantoate (aminidohydrolase route): step 1/1. Utilization of purines as secondary nitrogen sources, when primary sources are limiting. In Xenopus tropicalis (Western clawed frog), this protein is Allantoicase (allc).